The chain runs to 151 residues: Lipoprotein signal peptidase (151 aa).

Transmembrane regions (helical) follow at residues 33–53 (VIPDFFHLTYVLNPGAAFGLL), 58–78 (WIFIPAAIIVCAGIIYAQFKI), and 87–107 (LTLGLIGGGALGNLYDRLFIG). Catalysis depends on residues Asp111 and Asp126. A helical membrane pass occupies residues 120–140 (FVFNFADSAIVVGVGLLMILM).

It belongs to the peptidase A8 family.

It is found in the cell membrane. The enzyme catalyses Release of signal peptides from bacterial membrane prolipoproteins. Hydrolyzes -Xaa-Yaa-Zaa-|-(S,diacylglyceryl)Cys-, in which Xaa is hydrophobic (preferably Leu), and Yaa (Ala or Ser) and Zaa (Gly or Ala) have small, neutral side chains.. Its pathway is protein modification; lipoprotein biosynthesis (signal peptide cleavage). In terms of biological role, this protein specifically catalyzes the removal of signal peptides from prolipoproteins. In Desulfitobacterium hafniense (strain DSM 10664 / DCB-2), this protein is Lipoprotein signal peptidase.